Here is a 296-residue protein sequence, read N- to C-terminus: NADH-cytochrome b5 reductase 1 (296 aa).

A helical membrane pass occupies residues 11–31; that stretch reads LSAVLVKFAPFAVAVIAILAA. The region spanning 47-152 is the FAD-binding FR-type domain; the sequence is SEFQNFVLKE…RGPKGAMVYT (106 aa). FAD-binding positions include 132 to 147 and 158 to 195; these read TTLK…GPKG and HIGM…KIDL.

The protein belongs to the flavoprotein pyridine nucleotide cytochrome reductase family. Monomer. Component of the 2-(3-amino-3-carboxypropyl)histidine synthase complex composed of dph1, dph2, dph3 and a NADH-dependent reductase, predominantly cbr1. It depends on FAD as a cofactor.

It localises to the mitochondrion outer membrane. It carries out the reaction 2 Fe(III)-[cytochrome b5] + NADH = 2 Fe(II)-[cytochrome b5] + NAD(+) + H(+). The enzyme catalyses 2 Fe(3+)-[Dph3] + NADH = 2 Fe(2+)-[Dph3] + NAD(+) + H(+). It participates in protein modification; peptidyl-diphthamide biosynthesis. Its function is as follows. NADH-dependent reductase for dph3 and cytochrome b5. Required for the first step of diphthamide biosynthesis, a post-translational modification of histidine which occurs in elongation factor 2. Dph1 and dph2 transfer a 3-amino-3-carboxypropyl (ACP) group from S-adenosyl-L-methionine (SAM) to a histidine residue, the reaction is assisted by a reduction system comprising dph3 and a NADH-dependent reductase, predominantly cbr1. By reducing dph3, also involved in the formation of the tRNA wobble base modification mcm5s 2U (5-methoxycarbonylmethyl-2-thiouridine), mediated by the elongator complex. The cytochrome b5/NADH cytochrome b5 reductase electron transfer system supports the catalytic activity of several sterol biosynthetic enzymes. This chain is NADH-cytochrome b5 reductase 1 (cbr1), found in Aspergillus terreus (strain NIH 2624 / FGSC A1156).